The following is a 703-amino-acid chain: Calpain-8 (703 aa).

One can recognise a Calpain catalytic domain in the interval 45 to 344; sequence LFKDPEFPAC…FSRLEICNLS (300 aa). Catalysis depends on residues cysteine 105, histidine 262, and asparagine 286. The domain III stretch occupies residues 356–379; it reads WNLVLFNGHWTRGSTAGGCQNYPA. EF-hand domains lie at 575–610, 618–640, and 670–703; these read FNIN…IQKY, DYNH…AGFT, and IRLE…CVLV. Ca(2+)-binding residues include aspartate 588, asparagine 590, threonine 592, threonine 594, glutamate 599, aspartate 618, asparagine 620, serine 622, threonine 624, and glutamate 629.

This sequence belongs to the peptidase C2 family. In terms of assembly, monomer and homooligomer. Interacts with COPS1/GPS1, COPB1, EYA2, NME2, NME4 and TOMM70. Ca(2+) is required as a cofactor. In terms of processing, undergoes autolytic cleavage between Ala-5 and Ala-6 which gives rise to fragments extending from Ala-6 to the C-terminus, Ala-6 to the EF-hand 2 domain and from Ala-6 to the beginning of domain III. As to expression, stomach.

It is found in the cytoplasm. The protein localises to the golgi apparatus. It catalyses the reaction Broad endopeptidase specificity.. In terms of biological role, calcium-regulated non-lysosomal thiol-protease. Involved in membrane trafficking in the gastric surface mucus cells (pit cells) and may involve the membrane trafficking of mucus cells via interactions with coat protein. Proteolytically cleaves the beta-subunit of coatomer complex. This is Calpain-8 (CAPN8) from Homo sapiens (Human).